Reading from the N-terminus, the 571-residue chain is Proline--tRNA ligase (571 aa).

The protein belongs to the class-II aminoacyl-tRNA synthetase family. ProS type 1 subfamily. As to quaternary structure, homodimer.

It localises to the cytoplasm. The enzyme catalyses tRNA(Pro) + L-proline + ATP = L-prolyl-tRNA(Pro) + AMP + diphosphate. Functionally, catalyzes the attachment of proline to tRNA(Pro) in a two-step reaction: proline is first activated by ATP to form Pro-AMP and then transferred to the acceptor end of tRNA(Pro). As ProRS can inadvertently accommodate and process non-cognate amino acids such as alanine and cysteine, to avoid such errors it has two additional distinct editing activities against alanine. One activity is designated as 'pretransfer' editing and involves the tRNA(Pro)-independent hydrolysis of activated Ala-AMP. The other activity is designated 'posttransfer' editing and involves deacylation of mischarged Ala-tRNA(Pro). The misacylated Cys-tRNA(Pro) is not edited by ProRS. This is Proline--tRNA ligase from Photobacterium profundum (strain SS9).